Reading from the N-terminus, the 180-residue chain is Adenine phosphoribosyltransferase (180 aa).

Position 2 is an N-acetylserine (Ser2). Phosphoserine occurs at positions 4, 15, and 30. Tyr60 is modified (phosphotyrosine). Position 66 is a phosphoserine (Ser66). N6-acetyllysine is present on Lys114. Thr135 is subject to Phosphothreonine.

It belongs to the purine/pyrimidine phosphoribosyltransferase family. In terms of assembly, homodimer.

Its subcellular location is the cytoplasm. It carries out the reaction AMP + diphosphate = 5-phospho-alpha-D-ribose 1-diphosphate + adenine. The protein operates within purine metabolism; AMP biosynthesis via salvage pathway; AMP from adenine: step 1/1. Functionally, catalyzes a salvage reaction resulting in the formation of AMP, that is energically less costly than de novo synthesis. The chain is Adenine phosphoribosyltransferase from Mus pahari (Gairdner's shrew-mouse).